A 148-amino-acid polypeptide reads, in one-letter code: Putative nickel-responsive regulator (148 aa).

The Ni(2+) site is built by H88, H99, H101, and C107.

It belongs to the transcriptional regulatory CopG/NikR family. Ni(2+) serves as cofactor.

Functionally, transcriptional regulator. This Helicobacter pylori (strain Shi470) protein is Putative nickel-responsive regulator.